The chain runs to 139 residues: Large ribosomal subunit protein bL17 (139 aa).

Belongs to the bacterial ribosomal protein bL17 family. In terms of assembly, part of the 50S ribosomal subunit. Contacts protein L32.

The polypeptide is Large ribosomal subunit protein bL17 (Cereibacter sphaeroides (strain ATCC 17029 / ATH 2.4.9) (Rhodobacter sphaeroides)).